Reading from the N-terminus, the 546-residue chain is Choline oxidase (546 aa).

FAD is bound by residues 23 to 24, Glu-44, Trp-71, 90 to 92, 96 to 103, Ala-232, and Tyr-465; these read SA, AKV, and CSSHNSCI. Tele-8alpha-FAD histidine is present on His-99. Catalysis depends on His-466, which acts as the Proton acceptor. FAD contacts are provided by residues Ala-500 and 510–512; that span reads NPN.

This sequence belongs to the GMC oxidoreductase family. In terms of assembly, homodimer. FAD is required as a cofactor.

It carries out the reaction choline + 2 O2 + H2O = glycine betaine + 2 H2O2 + H(+). Its pathway is amine and polyamine biosynthesis; betaine biosynthesis via choline pathway; betaine from choline: step 1/1. Functionally, catalyzes the two-step oxidative conversion of choline to glycine-betaine with betaine aldehyde as an intermediate. Glycine-betaine accumulates to high levels in the cytoplasm of cells to prevent dehydration and plasmolysis in adverse hyperosmotic environments. Accepts either choline or the reaction intermediate betaine-aldehyde as substrate. The polypeptide is Choline oxidase (codA) (Arthrobacter globiformis).